Here is a 122-residue protein sequence, read N- to C-terminus: Large ribosomal subunit protein uL14c (122 aa).

The protein belongs to the universal ribosomal protein uL14 family. Part of the 50S ribosomal subunit.

The protein localises to the plastid. It localises to the chloroplast. Functionally, binds to 23S rRNA. The sequence is that of Large ribosomal subunit protein uL14c from Amborella trichopoda.